A 326-amino-acid chain; its full sequence is Phenylserine dehydratase (326 aa).

In terms of assembly, monomer. Pyridoxal 5'-phosphate is required as a cofactor.

The catalysed reaction is L-threo-3-phenylserine = 3-phenylpyruvate + NH4(+). With respect to regulation, inhibited by phenylhydrazine, hydroxylamine, p-chloromercuribenzoate, and HgCl(2). This chain is Phenylserine dehydratase, found in Ralstonia pickettii (Burkholderia pickettii).